The chain runs to 374 residues: tRNA-specific 2-thiouridylase MnmA (374 aa).

ATP-binding positions include 12-19 and M38; that span reads GMSGGVDS. The interaction with target base in tRNA stretch occupies residues 98 to 100; that stretch reads NPD. C103 functions as the Nucleophile in the catalytic mechanism. An intrachain disulfide couples C103 to C207. G128 lines the ATP pocket. The segment at 157 to 159 is interaction with tRNA; it reads KDQ. C207 (cysteine persulfide intermediate) is an active-site residue. Positions 321-322 are interaction with tRNA; sequence RY.

The protein belongs to the MnmA/TRMU family.

It localises to the cytoplasm. The catalysed reaction is S-sulfanyl-L-cysteinyl-[protein] + uridine(34) in tRNA + AH2 + ATP = 2-thiouridine(34) in tRNA + L-cysteinyl-[protein] + A + AMP + diphosphate + H(+). Its function is as follows. Catalyzes the 2-thiolation of uridine at the wobble position (U34) of tRNA, leading to the formation of s(2)U34. The polypeptide is tRNA-specific 2-thiouridylase MnmA (Aliivibrio fischeri (strain MJ11) (Vibrio fischeri)).